An 89-amino-acid chain; its full sequence is Ixosin-B (89 aa).

Residues 1 to 26 form the signal peptide; that stretch reads MASGWTHRLLLLAAVVTLGATPIAAA. Residues 27–57 constitute a propeptide that is removed on maturation; it reads SMEYLVTAPGYLTPNADIKITAVVTNPSSAG. Positions 68–89 are disordered; the sequence is SGIQPEQHSSGKSDVRRWRSRY. Positions 76 to 89 are enriched in basic and acidic residues; the sequence is SSGKSDVRRWRSRY.

Functionally, has antifungal activity against C.albicans. Has antibacterial activity against the Gram-positive bacterium S.aureus and the Gram-negative bacterium E.coli. Lacks hemolytic activity against rabbit erythrocytes. The sequence is that of Ixosin-B from Ixodes sinensis (Hard tick).